A 129-amino-acid chain; its full sequence is Vacuolar transporter chaperone complex subunit 1 (129 aa).

The residue at position 2 (serine 2) is an N-acetylserine. At 2–32 (SSAPLLQRTPGKKIALPTRVEPKVFFANERT) the chain is on the cytoplasmic side. Residues 33 to 53 (FLSWLNFTVMLGGLGVGLLNF) form a helical membrane-spanning segment. At 54 to 59 (GDKIGR) the chain is on the vacuolar side. Residues 60–80 (VSAGLFTFVAMGTMIYALVTY) form a helical membrane-spanning segment. The Cytoplasmic segment spans residues 81-98 (HWRAAAIRRRGSGPYDDR). Residues 99–119 (LGPTLLCFFLLVAVIINFILR) form a helical membrane-spanning segment. Topologically, residues 120-129 (LKYNDANTKL) are vacuolar.

Belongs to the VTC1 family. The VTC core complex is an integral membrane heterooligomer composed of the catalytic subunit VTC4 and the accessory subunits VTC1, VTC2 and VTC3. The complex exists in 2 different sub-complexes: VTC1-VTC2-VCT4 and VCT1-VTC3-VTC4. The VCT1-VTC3-VTC4 subcomplex is mostly found on the vacuolar membrane. The VTC1-VTC2-VCT4 subcomplex is observed in the cell periphery, probably ER and nuclear envelope, but localizes to the vacuole under phosphate starvation. Each subunit contains 3 transmembrane helices. VTC1 is a small membrane protein without hydrophilic domain. VTC2, VTC3 and VTC4 are related and have 2 hydrophilic domains that face the cytosol, an N-terminal SPX domain and the central core domain. The central core in VTC4 is the catalytic domain, with the essential catalytic lysine replaced by isoleucine and leucine in VTC2 and VTC3, respectively. The core complex associates with the accessory subunit VTC5. The complex interacts with the v-SNARE NYV1 and with the V(0) subunit of V-ATPase VPH1.

Its subcellular location is the vacuole membrane. It is found in the cytoplasm. The protein localises to the cell cortex. The protein resides in the endoplasmic reticulum membrane. It localises to the cytoplasmic vesicle. Its subcellular location is the autophagosome membrane. Accessory subunit of the vacuolar transporter chaperone (VTC) complex. The VTC complex acts as a vacuolar polyphosphate polymerase that catalyzes the synthesis of inorganic polyphosphate (polyP) via transfer of phosphate from ATP to a growing polyP chain, releasing ADP. VTC exposes its catalytic domain VTC4 to the cytosol, where the growing polyP chain winds through a tunnel-shaped pocket, integrating cytoplasmic polymer synthesis with polyP membrane translocation. The VTC complex carries 9 vacuolar transmembrane domains, which are likely to constitute the translocation channel into the organelle lumen. PolyP synthesis is tightly coupled to its transport into the vacuole lumen, in order to avoid otherwise toxic intermediates in the cytosol, and it depends on the proton gradient across the membrane, formed by V-ATPase. VTC1 contributes only 3 transmembrane domains to the complex. The VTC complex also plays a role in vacuolar membrane fusion. Required for SEC18/NSF activity in SNARE priming, membrane binding of LMA1 and V(0) trans-complex formation. This is Vacuolar transporter chaperone complex subunit 1 from Saccharomyces cerevisiae (strain ATCC 204508 / S288c) (Baker's yeast).